The following is a 465-amino-acid chain: Cysteine--tRNA ligase (465 aa).

Cys-29 provides a ligand contact to Zn(2+). The short motif at 31–41 (PTVYNYIHIGN) is the 'HIGH' region element. Zn(2+)-binding residues include Cys-209, His-234, and Glu-238. The 'KMSKS' region motif lies at 266 to 270 (KMSKS). Lys-269 provides a ligand contact to ATP. A Phosphoserine modification is found at Ser-270.

Belongs to the class-I aminoacyl-tRNA synthetase family. Monomer. Zn(2+) serves as cofactor.

The protein resides in the cytoplasm. It catalyses the reaction tRNA(Cys) + L-cysteine + ATP = L-cysteinyl-tRNA(Cys) + AMP + diphosphate. The protein is Cysteine--tRNA ligase of Bacillus cereus (strain G9842).